Consider the following 569-residue polypeptide: Falcipain-1 (569 aa).

Topologically, residues 1–35 (MVAIKEMKEFAFARPSLVETLNKKKKFLKKKEKRT) are cytoplasmic. A propeptide spans 1 to 332 (MVAIKEMKEF…KRNEKDIFSK (332 aa)) (activation peptide). A helical; Signal-anchor for type II membrane protein transmembrane segment spans residues 36-56 (FVLSIYAFITFIIFCIGILYF). Residues 57-569 (TNKSSAHNNN…IGEEVFYPIL (513 aa)) are Lumenal-facing. N-linked (GlcNAc...) asparagine glycosylation is found at Asn-58, Asn-98, Asn-121, and Asn-127. The segment at 97-118 (LNESSNEEDEEKYTLNSETYNN) is disordered. Intrachain disulfides connect Cys-354–Cys-395, Cys-388–Cys-428, and Cys-413–Cys-433. Residue Cys-357 is part of the active site. N-linked (GlcNAc...) asparagine glycosylation is found at Asn-479 and Asn-487. Cys-482 and Cys-558 form a disulfide bridge. Active-site residues include His-488 and Asn-533.

Belongs to the peptidase C1 family. Post-translationally, contains disulfide bonds.

It localises to the membrane. It is found in the cytoplasmic granule. In terms of biological role, cysteine protease. In the mosquito midgut, required for parasite development. This chain is Falcipain-1, found in Plasmodium falciparum (isolate 3D7).